The following is a 544-amino-acid chain: Methionine--tRNA ligase (544 aa).

A 'HIGH' region motif is present at residues Pro-10–His-20. Zn(2+) is bound by residues Cys-141, Cys-144, Cys-153, and Cys-156. Positions Lys-329–Ser-333 match the 'KMSKS' region motif. ATP is bound at residue Thr-332.

This sequence belongs to the class-I aminoacyl-tRNA synthetase family. MetG type 1 subfamily. As to quaternary structure, monomer. Zn(2+) is required as a cofactor.

It is found in the cytoplasm. It catalyses the reaction tRNA(Met) + L-methionine + ATP = L-methionyl-tRNA(Met) + AMP + diphosphate. Its function is as follows. Is required not only for elongation of protein synthesis but also for the initiation of all mRNA translation through initiator tRNA(fMet) aminoacylation. This Bacillus cereus (strain B4264) protein is Methionine--tRNA ligase.